We begin with the raw amino-acid sequence, 818 residues long: MVNETMKHQFKFNPLATAIFTLLCSGSIQSSYAESAGVVSNIDNNQLKASIKEAYPGQEFFQQYYVDKSAPEAQLRNNKYLSSAFCQGTWITPINPETKALDADKATSVVTADYGHYNPAGDSVLEGNVVIDQEGRTVRADKVTIDKTQTFAHAQGRVQLAQGGLLSQSDEIDYNLKTQTGNLDNSFYISEQQHAHGHAGKIERTSPNVMVLNDATYTTCPPGQKPGWKIQANKIELNQETGRGVTRGTKLYVKDVPVLAVPYFNFPIDDRRTTGILNPQFGFSNDGGIELSVPVYLNLAPNYDATITPRYLADRGAMLQGEFRYLTDGFGAGQIWGGILPSDKEYDDKDRKDFHFLHNWDINDQWSTNLEYNYASDKDYFSDLDSSPISKTDLNLRRAWELNYQHGIPGLKAQLKVEDFQTLDPEVKDVNKPYARLPQFLLNYVTGNPLGLQYEFNNDTAYFKKSINDDSAQESSGTRIYNQFATRYNYRTPAAFVIPELSVRSIQTFYDKDSIASQGLDGGSENKSVVVPQFTLDTGLNFEREGKYLQTLTPRAFYAYAPYKNQDGYPNFDSTTASISYDQLFNPYRFYGHDRLEDNNFLSLGVSYSLFDTVGLERLRASVGQSYYFEDRRVTLKQQDEIDTERNTGPVVSLSSQLNQNFTIAANSAWMSNGDNAQRDFQLYYTGDKGNLYNLGYFYRKDIPGRQDTYDQVVASFIQPIKDNWRIMGHVQYDMDNDVARELLLGVNYESCCWGISVYGRSYYNDLDDPKSPDVSEKRAIMAEITLKGLGGLNNKLASLLENRVLGFNKINQSWTQR.

The signal sequence occupies residues 1-33 (MVNETMKHQFKFNPLATAIFTLLCSGSIQSSYA).

It belongs to the LptD family. In terms of assembly, component of the lipopolysaccharide transport and assembly complex. Interacts with LptE and LptA.

The protein localises to the cell outer membrane. Together with LptE, is involved in the assembly of lipopolysaccharide (LPS) at the surface of the outer membrane. This Acinetobacter baumannii (strain ATCC 19606 / DSM 30007 / JCM 6841 / CCUG 19606 / CIP 70.34 / NBRC 109757 / NCIMB 12457 / NCTC 12156 / 81) protein is LPS-assembly protein LptD.